A 1397-amino-acid polypeptide reads, in one-letter code: Clustered mitochondria protein homolog (1397 aa).

The stretch at 30 to 63 (LPSFIDQKGDLKIPSHYEETITDLKLTLTVIPKT) is one TPR 1 repeat. 2 disordered regions span residues 158–203 (TARG…LSRE) and 526–555 (DAAPPSEEEDDAGAEQEKKEEGKAEEDEEE). Basic and acidic residues predominate over residues 161-203 (GEAEKSDTNEEEQEQGKGKVGKPNEKESGETKETDSQPELSRE). The region spanning 368-640 (DSSRSQLMLI…RTTPRDIEFI (273 aa)) is the Clu domain. The TPR 2 repeat unit spans residues 559–595 (EKVLYGLSSDSQKILEDKSFEKPLKLLSEVFHLKPHG). Basic and acidic residues-rich tracts occupy residues 686–703 (EGKLEKDGSKGTNSEEKS), 812–831 (EKVEKDRREAEEAEKAKERA), 839–860 (SDDKNQETIENSDAKSKENTES), and 1019–1033 (QREQKQESVVDNVEK). Disordered regions lie at residues 686-707 (EGKLEKDGSKGTNSEEKSQIAL), 812-869 (EKVE…EEQP), and 1019-1050 (QREQKQESVVDNVEKKHSKKSKKKSPALPIEN). Residues 1034-1043 (KHSKKSKKKS) are compositionally biased toward basic residues. TPR repeat units lie at residues 1167-1200 (IAAYMNSAYFELANSQIANSLKLYLRAMQLWTST) and 1209-1242 (VNLLTNVADSLYYAKDYESALKLFNAALEACSHL). Composition is skewed to polar residues over residues 1314-1338 (AQSKKSPPPTQTVAPNARVSASQAS) and 1362-1373 (PQSDPQIANQSV). The disordered stretch occupies residues 1314-1397 (AQSKKSPPPT…AKSKSKHTKA (84 aa)). Over residues 1375-1384 (DILKFIEGKS) the composition is skewed to basic and acidic residues. Residues 1386–1397 (PNAKSKSKHTKA) are compositionally biased toward basic residues.

The protein belongs to the CLU family. May associate with the eukaryotic translation initiation factor 3 (eIF-3) complex.

The protein resides in the cytoplasm. In terms of biological role, mRNA-binding protein involved in proper cytoplasmic distribution of mitochondria. In Lodderomyces elongisporus (strain ATCC 11503 / CBS 2605 / JCM 1781 / NBRC 1676 / NRRL YB-4239) (Yeast), this protein is Clustered mitochondria protein homolog.